A 544-amino-acid chain; its full sequence is NXPE family member 4 (544 aa).

An N-terminal signal peptide occupies residues 1-27 (MKISMINYKSLLALLFILASWIIFTVF). 7 N-linked (GlcNAc...) asparagine glycosylation sites follow: asparagine 29, asparagine 38, asparagine 47, asparagine 48, asparagine 92, asparagine 160, and asparagine 210.

This sequence belongs to the NXPE family.

It localises to the secreted. The polypeptide is NXPE family member 4 (NXPE4) (Homo sapiens (Human)).